The chain runs to 1026 residues: Multidrug resistance protein MdtC (1026 aa).

The Cytoplasmic portion of the chain corresponds to 1-6 (MRFFAL). A helical transmembrane segment spans residues 7-29 (FIYRPVATILIAAAITLCGILGF). Residues 30–335 (RLLPVAPLPQ…TIRASLQEVE (306 aa)) are Periplasmic-facing. The helical transmembrane segment at 336–353 (ETLAISVALVILVVFLFL) threads the bilayer. Residues 354 to 359 (RSGRAT) are Cytoplasmic-facing. Residues 360-379 (LIPAVAVPVSLIGTFAAMYL) traverse the membrane as a helical segment. Residues 380–388 (CGFSLNNLS) are Periplasmic-facing. A helical transmembrane segment spans residues 389-411 (LMALTIATGFVVDDAIVVLENIA). The Cytoplasmic segment spans residues 412 to 430 (RHLEARMKPLQAALQGTRE). Residues 431 to 453 (VGFTVISMSLSLVAVFLPLLLMG) traverse the membrane as a helical segment. Topologically, residues 454-467 (GLPGRLLREFAVTL) are periplasmic. Residues 468-490 (SVAIGISLVVSLTLTPMMCGWML) traverse the membrane as a helical segment. Residues 491–852 (KSSKPRTQPR…QVFQQTMNSQ (362 aa)) lie on the Cytoplasmic side of the membrane. The helical transmembrane segment at 853–875 (LILIVAAIATVYIVLGILYESYV) threads the bilayer. Residues 876–894 (HPLTILSTLPSAGVGALLA) lie on the Periplasmic side of the membrane. The chain crosses the membrane as a helical span at residues 895 to 917 (LELFNAPFSLIALIGIMLLIGIV). Topologically, residues 918-947 (KKNAIMMVDFALEAQRSGGLTPEQAIFQAC) are cytoplasmic. Residues 948–970 (LLRFRPIMMTTLAALFGALPLVL) form a helical membrane-spanning segment. Topologically, residues 971–984 (SGGDGSELRQPLGI) are periplasmic. Residues 985–1007 (TIVGGLVMSQLLTLYTTPVVYLF) form a helical membrane-spanning segment. Over 1008–1026 (FDRLRLRFSRKNSKPVVEI) the chain is Cytoplasmic.

This sequence belongs to the resistance-nodulation-cell division (RND) (TC 2.A.6) family. MdtC subfamily. As to quaternary structure, part of a tripartite efflux system composed of MdtA, MdtB and MdtC. MdtC forms a heteromultimer with MdtB.

It is found in the cell inner membrane. The sequence is that of Multidrug resistance protein MdtC from Salmonella typhi.